The primary structure comprises 189 residues: Peptidyl-tRNA hydrolase (189 aa).

Tyrosine 15 contributes to the tRNA binding site. The active-site Proton acceptor is the histidine 20. 3 residues coordinate tRNA: phenylalanine 66, asparagine 68, and asparagine 114.

It belongs to the PTH family. Monomer.

Its subcellular location is the cytoplasm. The catalysed reaction is an N-acyl-L-alpha-aminoacyl-tRNA + H2O = an N-acyl-L-amino acid + a tRNA + H(+). Hydrolyzes ribosome-free peptidyl-tRNAs (with 1 or more amino acids incorporated), which drop off the ribosome during protein synthesis, or as a result of ribosome stalling. Its function is as follows. Catalyzes the release of premature peptidyl moieties from peptidyl-tRNA molecules trapped in stalled 50S ribosomal subunits, and thus maintains levels of free tRNAs and 50S ribosomes. This is Peptidyl-tRNA hydrolase from Streptococcus pneumoniae (strain JJA).